A 350-amino-acid polypeptide reads, in one-letter code: Ribosomal RNA large subunit methyltransferase M (350 aa).

S-adenosyl-L-methionine-binding positions include 217-220 (APGG), D236, D256, and D272. The active-site Proton acceptor is K301.

This sequence belongs to the class I-like SAM-binding methyltransferase superfamily. RNA methyltransferase RlmE family. RlmM subfamily. As to quaternary structure, monomer.

The protein localises to the cytoplasm. The catalysed reaction is cytidine(2498) in 23S rRNA + S-adenosyl-L-methionine = 2'-O-methylcytidine(2498) in 23S rRNA + S-adenosyl-L-homocysteine + H(+). Functionally, catalyzes the 2'-O-methylation at nucleotide C2498 in 23S rRNA. This chain is Ribosomal RNA large subunit methyltransferase M, found in Cellvibrio japonicus (strain Ueda107) (Pseudomonas fluorescens subsp. cellulosa).